We begin with the raw amino-acid sequence, 83 residues long: Small ribosomal subunit protein bS16 (83 aa).

It belongs to the bacterial ribosomal protein bS16 family.

The sequence is that of Small ribosomal subunit protein bS16 from Azotobacter vinelandii (strain DJ / ATCC BAA-1303).